Consider the following 201-residue polypeptide: Histone chaperone asf1a-A (201 aa).

The protein belongs to the ASF1 family. In terms of assembly, interacts with histone H3 (including both histone H3.1 and H3.3) and histone H4. Interacts with hira and p60.

The protein resides in the nucleus. Its function is as follows. Histone chaperone that facilitates histone deposition and histone exchange and removal during nucleosome assembly and disassembly. Not critical for histone deposition during nucleosome assembly. In Xenopus laevis (African clawed frog), this protein is Histone chaperone asf1a-A (asf1aa).